A 695-amino-acid polypeptide reads, in one-letter code: ATP-dependent permease MDL1, mitochondrial (695 aa).

A mitochondrion-targeting transit peptide spans 1-100 (MIVRMIRLCK…RLFVLSKPES (100 aa)). 5 helical membrane passes run 103–123 (IGLA…VPSV), 156–176 (FTAL…RIII), 242–262 (FVGF…MMIL), 337–357 (GLFF…LLLV), and 372–392 (LSSF…LSSF). An ABC transmembrane type-1 domain is found at 103 to 398 (IGLALLLILI…LSSFYSELMK (296 aa)). The region spanning 432-673 (IVFKNVSFTY…PNSELNALLA (242 aa)) is the ABC transporter domain. Residue 467–474 (GPSGSGKS) participates in ATP binding.

It belongs to the ABC transporter superfamily. ABCB family. Mitochondrial peptide exporter (TC 3.A.1.212) subfamily.

Its subcellular location is the mitochondrion inner membrane. Its function is as follows. Mediates export of peptides with molecular masses of 2100 to 600 daltons generated upon proteolysis of mitochondrial inner membrane proteins. The protein is ATP-dependent permease MDL1, mitochondrial (MDL1) of Saccharomyces cerevisiae (strain ATCC 204508 / S288c) (Baker's yeast).